Consider the following 98-residue polypeptide: NADH-ubiquinone oxidoreductase chain 4L (98 aa).

3 helical membrane passes run 1 to 21, 29 to 49, and 61 to 81; these read MIPT…GMLI, SLLC…LIAL, and IILL…LVSI.

The protein belongs to the complex I subunit 4L family. In terms of assembly, core subunit of respiratory chain NADH dehydrogenase (Complex I) which is composed of 45 different subunits.

The protein resides in the mitochondrion inner membrane. It catalyses the reaction a ubiquinone + NADH + 5 H(+)(in) = a ubiquinol + NAD(+) + 4 H(+)(out). Its function is as follows. Core subunit of the mitochondrial membrane respiratory chain NADH dehydrogenase (Complex I) which catalyzes electron transfer from NADH through the respiratory chain, using ubiquinone as an electron acceptor. Part of the enzyme membrane arm which is embedded in the lipid bilayer and involved in proton translocation. The protein is NADH-ubiquinone oxidoreductase chain 4L (MT-ND4L) of Macaca ochreata (Booted macaque).